Consider the following 290-residue polypeptide: Bifunctional protein FolD (290 aa).

NADP(+)-binding positions include 174-176, isoleucine 199, and isoleucine 240; that span reads GHS.

The protein belongs to the tetrahydrofolate dehydrogenase/cyclohydrolase family. In terms of assembly, homodimer.

The catalysed reaction is (6R)-5,10-methylene-5,6,7,8-tetrahydrofolate + NADP(+) = (6R)-5,10-methenyltetrahydrofolate + NADPH. It carries out the reaction (6R)-5,10-methenyltetrahydrofolate + H2O = (6R)-10-formyltetrahydrofolate + H(+). Its pathway is one-carbon metabolism; tetrahydrofolate interconversion. Its function is as follows. Catalyzes the oxidation of 5,10-methylenetetrahydrofolate to 5,10-methenyltetrahydrofolate and then the hydrolysis of 5,10-methenyltetrahydrofolate to 10-formyltetrahydrofolate. The sequence is that of Bifunctional protein FolD from Methanosarcina acetivorans (strain ATCC 35395 / DSM 2834 / JCM 12185 / C2A).